Here is a 440-residue protein sequence, read N- to C-terminus: Asparagine--tRNA ligase (440 aa).

The protein belongs to the class-II aminoacyl-tRNA synthetase family. As to quaternary structure, homodimer.

It is found in the cytoplasm. It catalyses the reaction tRNA(Asn) + L-asparagine + ATP = L-asparaginyl-tRNA(Asn) + AMP + diphosphate + H(+). The chain is Asparagine--tRNA ligase from Roseiflexus castenholzii (strain DSM 13941 / HLO8).